The following is a 751-amino-acid chain: Leucine-rich repeat-containing protein 56 homolog (751 aa).

Positions 1–149 are disordered; sequence MKKSTVLDAR…IDKSRDNGQL (149 aa). A compositionally biased stretch (pro residues) spans 13 to 22; the sequence is GPLPRRPQQP. Composition is skewed to polar residues over residues 28-39 and 60-87; these read RNSSQVEKNNAR and HSQSQSLDTSFAPNTNTTLGSTDVNLNS. 5 LRR repeats span residues 210–235, 236–256, 258–279, 280–304, and 307–328; these read MPQLNSLKLNNSRITELRVLGTNYAN, LRRLWISNCLVSSVSGVGACA, VLEELYASFNSISDIDALTEVS, STLQVVDLEGNDIRDTDMLKRTLPQ, and KMKHLVLKGNPVASSETIVELS. Disordered regions lie at residues 430-538, 645-698, and 717-751; these read SRSH…QRQQ, TCTH…EKDW, and EAALKERVQGSKEVDGGGLEKVESEDEEDVSPVVF. Composition is skewed to polar residues over residues 456-471 and 662-671; these read KNSQSTASSGDSTNQG and QQEQPTTAGA. The segment covering 717–738 has biased composition (basic and acidic residues); that stretch reads EAALKERVQGSKEVDGGGLEKV. Over residues 739–751 the composition is skewed to acidic residues; that stretch reads ESEDEEDVSPVVF.

The protein belongs to the LRRC56 family.

The protein localises to the cell projection. The protein resides in the cilium. It is found in the flagellum. In terms of biological role, required for the assembly of dynein arms in the distal portion of flagellum axoneme. This is Leucine-rich repeat-containing protein 56 homolog from Trypanosoma brucei brucei (strain 927/4 GUTat10.1).